The sequence spans 252 residues: Ubiquinone biosynthesis O-methyltransferase (252 aa).

Positions 36, 60, 81, and 123 each coordinate S-adenosyl-L-methionine.

Belongs to the methyltransferase superfamily. UbiG/COQ3 family.

The catalysed reaction is a 3-demethylubiquinol + S-adenosyl-L-methionine = a ubiquinol + S-adenosyl-L-homocysteine + H(+). It catalyses the reaction a 3-(all-trans-polyprenyl)benzene-1,2-diol + S-adenosyl-L-methionine = a 2-methoxy-6-(all-trans-polyprenyl)phenol + S-adenosyl-L-homocysteine + H(+). It participates in cofactor biosynthesis; ubiquinone biosynthesis. In terms of biological role, O-methyltransferase that catalyzes the 2 O-methylation steps in the ubiquinone biosynthetic pathway. In Rickettsia prowazekii (strain Madrid E), this protein is Ubiquinone biosynthesis O-methyltransferase.